Reading from the N-terminus, the 196-residue chain is Agamous-like MADS-box protein AGL27 (196 aa).

In terms of domain architecture, MADS-box spans 1 to 61 (MGRRKIEIKR…GKLYDSSSGD (61 aa)). The 91-residue stretch at 80 to 170 (ALDLEEKIQN…ASQMGKNTLL (91 aa)) folds into the K-box domain. The tract at residues 175-196 (ERGMFPGSSSGNKIPETLPLLN) is disordered.

Interacts with AGL39, AGL97 and AGL74. As to expression, expressed in most plant tissues, embryo, seedlings, roots, leaves, stems, inflorescence, pollen, siliques and flowers.

Its subcellular location is the nucleus. Its function is as follows. Probable transcription factor involved in the negative regulation of flowering time in both long and short days, probably through the photoperiodic and vernalization pathways. Prevents premature flowering. This Arabidopsis thaliana (Mouse-ear cress) protein is Agamous-like MADS-box protein AGL27 (AGL27).